The following is a 339-amino-acid chain: AB hydrolase superfamily protein B1A11.02 (339 aa).

The protein belongs to the AB hydrolase superfamily.

The sequence is that of AB hydrolase superfamily protein B1A11.02 from Schizosaccharomyces pombe (strain 972 / ATCC 24843) (Fission yeast).